Here is a 229-residue protein sequence, read N- to C-terminus: Protein GLC8 (229 aa).

Disordered regions lie at residues 1 to 21 (MGGI…QQDP), 35 to 62 (TQKN…EIIG), and 107 to 229 (QFQD…TKEP). At serine 12 the chain carries Phosphoserine. Over residues 107 to 117 (QFQDIHIDEPK) the composition is skewed to basic and acidic residues. At threonine 118 the chain carries Phosphothreonine; by PHO85. Serine 158 is subject to Phosphoserine. Positions 164–173 (FEIKENKQPD) are enriched in basic and acidic residues. The span at 175–184 (ETNDENDEDS) shows a compositional bias: acidic residues. A Phosphoserine modification is found at serine 184. The segment covering 185 to 196 (PEARHKKFEEMR) has biased composition (basic and acidic residues).

Phosphorylated by the cyclin-CDKs PCL6-PHO85 and PCL7-PHO85. Phosphorylation of Thr-118 inactivates GLC8.

Its function is as follows. Modulator of GLC7 type-1 protein phosphatase. This Saccharomyces cerevisiae (strain ATCC 204508 / S288c) (Baker's yeast) protein is Protein GLC8 (GLC8).